A 487-amino-acid chain; its full sequence is Iron-sulfur cluster assembly SufBD family protein ycf24 (487 aa).

Belongs to the iron-sulfur cluster assembly SufBD family.

Its subcellular location is the plastid. The protein resides in the chloroplast. This chain is Iron-sulfur cluster assembly SufBD family protein ycf24 (ycf24), found in Pyropia yezoensis (Susabi-nori).